A 377-amino-acid chain; its full sequence is 5-hydroxytryptamine receptor 1D (377 aa).

Asparagine 5, asparagine 17, and asparagine 21 each carry an N-linked (GlcNAc...) asparagine glycan. 3 helical membrane-spanning segments follow: residues 39–64 (ISLA…TTIF), 76–97 (LIGS…ISIA), and 110–134 (LCDI…VIAL). A disulfide bond links cysteine 111 and cysteine 188. 2 residues coordinate serotonin: aspartate 118 and cysteine 122. A DRY motif; important for ligand-induced conformation changes motif is present at residues 135–137 (DRY). A run of 4 helical transmembrane segments spans residues 155-176 (AAVM…PLFW), 195-218 (ISYT…ILYG), 301-326 (KTLG…VLPI), and 336-359 (ALFD…YTVF). Position 321 (serine 321) interacts with serotonin. Positions 352 to 356 (NPIIY) match the NPxxY motif; important for ligand-induced conformation changes and signaling motif.

The protein belongs to the G-protein coupled receptor 1 family. In terms of assembly, homodimer. Heterodimer with HTR1B.

Its subcellular location is the cell membrane. G-protein coupled receptor for 5-hydroxytryptamine (serotonin). Also functions as a receptor for ergot alkaloid derivatives, various anxiolytic and antidepressant drugs and other psychoactive substances. Ligand binding causes a conformation change that triggers signaling via guanine nucleotide-binding proteins (G proteins) and modulates the activity of downstream effectors, such as adenylate cyclase. HTR1D is coupled to G(i)/G(o) G alpha proteins and mediates inhibitory neurotransmission by inhibiting adenylate cyclase activity. Regulates the release of 5-hydroxytryptamine in the brain, and thereby affects neural activity. May also play a role in regulating the release of other neurotransmitters. May play a role in vasoconstriction. This Canis lupus familiaris (Dog) protein is 5-hydroxytryptamine receptor 1D (HTR1D).